The primary structure comprises 759 residues: uncharacterized protein (759 aa).

Disordered stretches follow at residues 1–31 (MDGN…TSFQ) and 188–211 (NDEG…PFAN). The segment covering 17–31 (LSPLQTSFPSSTSFQ) has biased composition (low complexity). The span at 189–207 (DEGEDVKDNEQDDNIDESD) shows a compositional bias: acidic residues. The next 10 helical transmembrane spans lie at 434 to 454 (YFRT…ILPM), 456 to 476 (FQGG…VGIL), 486 to 505 (MYNS…LSRA), 517 to 537 (FCFS…YIVL), 555 to 575 (MFYA…GAAL), 597 to 617 (DKWK…VNQA), 620 to 640 (SQWP…YFTA), 643 to 663 (FGSN…LGNI), 670 to 690 (GVAF…GLAA), and 726 to 746 (LVMV…ALVV).

Belongs to the ThrE exporter (TC 2.A.79) family.

It is found in the endoplasmic reticulum membrane. This is an uncharacterized protein from Schizosaccharomyces pombe (strain 972 / ATCC 24843) (Fission yeast).